The sequence spans 155 residues: 6,7-dimethyl-8-ribityllumazine synthase (155 aa).

5-amino-6-(D-ribitylamino)uracil is bound by residues Phe-24, 58 to 60, and 82 to 84; these read AFE and VII. Position 87–88 (87–88) interacts with (2S)-2-hydroxy-3-oxobutyl phosphate; it reads ST. The Proton donor role is filled by His-90. Phe-115 serves as a coordination point for 5-amino-6-(D-ribitylamino)uracil. Residue Arg-129 participates in (2S)-2-hydroxy-3-oxobutyl phosphate binding.

This sequence belongs to the DMRL synthase family.

It catalyses the reaction (2S)-2-hydroxy-3-oxobutyl phosphate + 5-amino-6-(D-ribitylamino)uracil = 6,7-dimethyl-8-(1-D-ribityl)lumazine + phosphate + 2 H2O + H(+). It participates in cofactor biosynthesis; riboflavin biosynthesis; riboflavin from 2-hydroxy-3-oxobutyl phosphate and 5-amino-6-(D-ribitylamino)uracil: step 1/2. Functionally, catalyzes the formation of 6,7-dimethyl-8-ribityllumazine by condensation of 5-amino-6-(D-ribitylamino)uracil with 3,4-dihydroxy-2-butanone 4-phosphate. This is the penultimate step in the biosynthesis of riboflavin. The protein is 6,7-dimethyl-8-ribityllumazine synthase of Pelodictyon phaeoclathratiforme (strain DSM 5477 / BU-1).